The chain runs to 156 residues: MRPLSIKPTSLDVARHATSVESFGNHRPPISPWHSPVPYLFGGLAAMLGLIAFALLILACSYWRLSTSGDDSGERVDEEKESRSGVKAASAACEEKVLVIMAGDDLPRFLATPAANKCMCGHEGRMVIFKEDGIGAGEEKMGDREKAKENEETTSQ.

Residues Met-1–Tyr-39 lie on the Extracellular side of the membrane. The chain crosses the membrane as a helical span at residues Leu-40–Cys-60. The Cytoplasmic segment spans residues Ser-61–Gln-156. Positions Thr-67–Lys-87 are disordered. A compositionally biased stretch (basic and acidic residues) spans Ser-72–Ser-84. Positions Val-99 to Gly-103 match the VIMAG motif. The tract at residues Ala-136–Gln-156 is disordered.

The protein belongs to the GLUTAMINE DUMPER 1 (TC 9.B.60) family. Expressed in the vascular tissues, even in the minor veins of the leaves.

It is found in the membrane. In terms of biological role, probable subunit of an amino acid transporter involved in the regulation of the amino acid metabolism. Stimulates amino acid export by activating nonselective amino acid facilitators. In Arabidopsis thaliana (Mouse-ear cress), this protein is Protein GLUTAMINE DUMPER 4 (GDU4).